Here is a 206-residue protein sequence, read N- to C-terminus: Large ribosomal subunit protein uL4 (206 aa).

The disordered stretch occupies residues 45-76 (RQGTQSAKTRTEVSGGGIKPWRQKGTGRARQG).

This sequence belongs to the universal ribosomal protein uL4 family. As to quaternary structure, part of the 50S ribosomal subunit.

Functionally, one of the primary rRNA binding proteins, this protein initially binds near the 5'-end of the 23S rRNA. It is important during the early stages of 50S assembly. It makes multiple contacts with different domains of the 23S rRNA in the assembled 50S subunit and ribosome. Forms part of the polypeptide exit tunnel. The chain is Large ribosomal subunit protein uL4 from Clostridium acetobutylicum (strain ATCC 824 / DSM 792 / JCM 1419 / IAM 19013 / LMG 5710 / NBRC 13948 / NRRL B-527 / VKM B-1787 / 2291 / W).